A 383-amino-acid chain; its full sequence is Deoxyguanosinetriphosphate triphosphohydrolase-like protein (383 aa).

An HD domain is found at 62–198 (RLTHSLEVST…AALADDISYI (137 aa)).

This sequence belongs to the dGTPase family. Type 2 subfamily.

This chain is Deoxyguanosinetriphosphate triphosphohydrolase-like protein, found in Rickettsia bellii (strain RML369-C).